The chain runs to 272 residues: GPN-loop GTPase 3 (272 aa).

12–17 (GAGKST) lines the GTP pocket. A Gly-Pro-Asn (GPN)-loop; involved in dimer interface motif is present at residues 69 to 71 (GPN). 172–175 (SKMD) is a GTP binding site. Positions 253 to 272 (QYGEDEEPKVPKDMDDGDFD) are disordered.

Belongs to the GPN-loop GTPase family. Heterodimers with GPN1 or GPN2. Binds to RNA polymerase II (RNAPII).

In terms of biological role, small GTPase required for proper nuclear import of RNA polymerase II and III (RNAPII and RNAPIII). May act at an RNAP assembly step prior to nuclear import. This is GPN-loop GTPase 3 from Cryptococcus neoformans var. neoformans serotype D (strain JEC21 / ATCC MYA-565) (Filobasidiella neoformans).